The chain runs to 231 residues: NADH-ubiquinone oxidoreductase chain 4 (231 aa).

The next 6 helical transmembrane spans lie at 1–21, 34–54, 61–80, 84–106, 118–138, and 156–178; these read PIAG…YGII, LFIP…LTCL, SLIA…AITI, WGLS…LFCL, VLIL…WWLL, and LLIM…LSML.

It belongs to the complex I subunit 4 family.

It localises to the mitochondrion membrane. It catalyses the reaction a ubiquinone + NADH + 5 H(+)(in) = a ubiquinol + NAD(+) + 4 H(+)(out). Its function is as follows. Core subunit of the mitochondrial membrane respiratory chain NADH dehydrogenase (Complex I) that is believed to belong to the minimal assembly required for catalysis. Complex I functions in the transfer of electrons from NADH to the respiratory chain. The immediate electron acceptor for the enzyme is believed to be ubiquinone. The chain is NADH-ubiquinone oxidoreductase chain 4 (MT-ND4) from Azemiops feae (Fea's viper).